The following is a 250-amino-acid chain: Adenosylcobinamide-GDP ribazoletransferase (250 aa).

A run of 6 helical transmembrane segments spans residues 32–52, 59–79, 113–133, 136–156, 185–205, and 230–250; these read KGII…MVAY, LAHS…TGGL, GVLA…GLGE, IYWG…YGCY, LTFI…LLPI, and CELT…AGLF.

It belongs to the CobS family. The cofactor is Mg(2+).

It is found in the cell membrane. It catalyses the reaction alpha-ribazole + adenosylcob(III)inamide-GDP = adenosylcob(III)alamin + GMP + H(+). The enzyme catalyses alpha-ribazole 5'-phosphate + adenosylcob(III)inamide-GDP = adenosylcob(III)alamin 5'-phosphate + GMP + H(+). It participates in cofactor biosynthesis; adenosylcobalamin biosynthesis; adenosylcobalamin from cob(II)yrinate a,c-diamide: step 7/7. In terms of biological role, joins adenosylcobinamide-GDP and alpha-ribazole to generate adenosylcobalamin (Ado-cobalamin). Also synthesizes adenosylcobalamin 5'-phosphate from adenosylcobinamide-GDP and alpha-ribazole 5'-phosphate. The sequence is that of Adenosylcobinamide-GDP ribazoletransferase from Alkaliphilus metalliredigens (strain QYMF).